Reading from the N-terminus, the 162-residue chain is Allophycocyanin subunit beta (162 aa).

N4-methylasparagine is present on N72. A (2R,3E)-phycocyanobilin-binding site is contributed by C82.

Belongs to the phycobiliprotein family. In terms of assembly, heterohexamer of two alpha chains, one alpha-B chain and three beta chains. Post-translationally, contains one covalently linked phycocyanobilin chromophore. The chromophore is added by phycocyanobilin lyase CpcS 1.

The protein resides in the cellular thylakoid membrane. In terms of biological role, light-harvesting photosynthetic bile pigment-protein from the phycobiliprotein complex. Allophycocyanin has a maximum absorption at approximately 650 to 653 nanometers. The polypeptide is Allophycocyanin subunit beta (apcB) (Nostoc sp. (strain PCC 7120 / SAG 25.82 / UTEX 2576)).